Here is a 192-residue protein sequence, read N- to C-terminus: Peptidyl-tRNA hydrolase (192 aa).

Y17 is a binding site for tRNA. Residue H22 is the Proton acceptor of the active site. TRNA-binding residues include Y68, N70, and N116.

The protein belongs to the PTH family. In terms of assembly, monomer.

The protein localises to the cytoplasm. It carries out the reaction an N-acyl-L-alpha-aminoacyl-tRNA + H2O = an N-acyl-L-amino acid + a tRNA + H(+). In terms of biological role, hydrolyzes ribosome-free peptidyl-tRNAs (with 1 or more amino acids incorporated), which drop off the ribosome during protein synthesis, or as a result of ribosome stalling. Catalyzes the release of premature peptidyl moieties from peptidyl-tRNA molecules trapped in stalled 50S ribosomal subunits, and thus maintains levels of free tRNAs and 50S ribosomes. This chain is Peptidyl-tRNA hydrolase, found in Mycobacterium sp. (strain JLS).